We begin with the raw amino-acid sequence, 370 residues long: Chaperone protein DnaJ (370 aa).

The region spanning 5-69 (DYYEVLGVDR…QKKAHYDQFG (65 aa)) is the J domain. Residues 128–210 (GKETTIEIPR…CGGKGKVRKR (83 aa)) form a CR-type zinc finger. Zn(2+) is bound by residues Cys-141, Cys-144, Cys-158, Cys-161, Cys-184, Cys-187, Cys-198, and Cys-201. CXXCXGXG motif repeat units lie at residues 141 to 148 (CHTCSGSG), 158 to 165 (CPHCGGSG), 184 to 191 (CHHCEGTG), and 198 to 205 (CATCGGKG).

The protein belongs to the DnaJ family. In terms of assembly, homodimer. Zn(2+) serves as cofactor.

Its subcellular location is the cytoplasm. In terms of biological role, participates actively in the response to hyperosmotic and heat shock by preventing the aggregation of stress-denatured proteins and by disaggregating proteins, also in an autonomous, DnaK-independent fashion. Unfolded proteins bind initially to DnaJ; upon interaction with the DnaJ-bound protein, DnaK hydrolyzes its bound ATP, resulting in the formation of a stable complex. GrpE releases ADP from DnaK; ATP binding to DnaK triggers the release of the substrate protein, thus completing the reaction cycle. Several rounds of ATP-dependent interactions between DnaJ, DnaK and GrpE are required for fully efficient folding. Also involved, together with DnaK and GrpE, in the DNA replication of plasmids through activation of initiation proteins. This chain is Chaperone protein DnaJ, found in Halalkalibacterium halodurans (strain ATCC BAA-125 / DSM 18197 / FERM 7344 / JCM 9153 / C-125) (Bacillus halodurans).